The following is a 199-amino-acid chain: Recombination protein RecR (199 aa).

Residues 58–73 form a C4-type zinc finger; the sequence is CSVCNNITDVDPCVFC. One can recognise a Toprim domain in the interval 81–176; that stretch reads RLVCVVEEPT…RLTRIATGVP (96 aa).

This sequence belongs to the RecR family.

Functionally, may play a role in DNA repair. It seems to be involved in an RecBC-independent recombinational process of DNA repair. It may act with RecF and RecO. The polypeptide is Recombination protein RecR (Acidobacterium capsulatum (strain ATCC 51196 / DSM 11244 / BCRC 80197 / JCM 7670 / NBRC 15755 / NCIMB 13165 / 161)).